The sequence spans 383 residues: Succinyl-diaminopimelate desuccinylase (383 aa).

Histidine 73 lines the Zn(2+) pocket. Aspartate 75 is an active-site residue. Aspartate 107 is a binding site for Zn(2+). Glutamate 141 functions as the Proton acceptor in the catalytic mechanism. Glutamate 142, glutamate 170, and histidine 356 together coordinate Zn(2+).

Belongs to the peptidase M20A family. DapE subfamily. In terms of assembly, homodimer. Zn(2+) serves as cofactor. It depends on Co(2+) as a cofactor.

It catalyses the reaction N-succinyl-(2S,6S)-2,6-diaminopimelate + H2O = (2S,6S)-2,6-diaminopimelate + succinate. It participates in amino-acid biosynthesis; L-lysine biosynthesis via DAP pathway; LL-2,6-diaminopimelate from (S)-tetrahydrodipicolinate (succinylase route): step 3/3. Functionally, catalyzes the hydrolysis of N-succinyl-L,L-diaminopimelic acid (SDAP), forming succinate and LL-2,6-diaminopimelate (DAP), an intermediate involved in the bacterial biosynthesis of lysine and meso-diaminopimelic acid, an essential component of bacterial cell walls. This chain is Succinyl-diaminopimelate desuccinylase, found in Pseudomonas aeruginosa (strain UCBPP-PA14).